The following is a 169-amino-acid chain: Major fimbrial subunit SMF-1 (169 aa).

An N-terminal signal peptide occupies residues 1 to 11 (MLAAAPLAANA).

The protein belongs to the fimbrial protein family.

The protein localises to the fimbrium. In terms of biological role, involved in adherence to eukaryotic epithelial cells and abiotic surfaces. Mediates agglutination of animal red blood cells. This is Major fimbrial subunit SMF-1 from Stenotrophomonas maltophilia (strain K279a).